Here is a 181-residue protein sequence, read N- to C-terminus: Bifunctional protein PyrR (181 aa).

The short motif at 101-113 (VILVDDVLFTGRT) is the PRPP-binding element.

The protein belongs to the purine/pyrimidine phosphoribosyltransferase family. PyrR subfamily.

It catalyses the reaction UMP + diphosphate = 5-phospho-alpha-D-ribose 1-diphosphate + uracil. In terms of biological role, regulates the transcription of the pyrimidine nucleotide (pyr) operon in response to exogenous pyrimidines. Its function is as follows. Also displays a weak uracil phosphoribosyltransferase activity which is not physiologically significant. The protein is Bifunctional protein PyrR of Desulfosudis oleivorans (strain DSM 6200 / JCM 39069 / Hxd3) (Desulfococcus oleovorans).